The sequence spans 428 residues: Glycine reductase complex component B subunits alpha and beta (428 aa).

Cys242 (schiff-base intermediate with substrate; via pyruvic acid) is an active-site residue. Cys242 carries the post-translational modification Pyruvic acid (Cys).

In terms of assembly, heterohexamer of two alpha, two beta and two gamma subunits. Component of the glycine reductase complex, together with components A and C. PB is substrate specific. Post-translationally, the peptide chain is cleaved into beta and alpha chains, and the alpha chain N-terminal cysteine is deaminated and oxidized to form a reactive pyruvoyl group.

The enzyme catalyses acetyl phosphate + [thioredoxin]-disulfide + NH4(+) + H2O = [thioredoxin]-dithiol + glycine + phosphate + H(+). Its function is as follows. In the first step of glycine reductase, the substrate is bound to component PB via a Schiff base intermediate. Then the PB-activated substrate is nucleophilically attacked by the selenol anion of component PA to transform it to a carboxymethylated selenoether and the respective amine. By action of component PC, acetyl phosphate is formed, leaving component PA in its oxidized state. Finally component PA becomes reduced by the thioredoxin system to start a new catalytic cycle of reductive deamination. This Peptoclostridium acidaminophilum (Eubacterium acidaminophilum) protein is Glycine reductase complex component B subunits alpha and beta (grdE).